The chain runs to 497 residues: Tryptophan decarboxylase 2 (497 aa).

Residues alanine 162, serine 163, threonine 257, and asparagine 311 each contribute to the pyridoxal 5'-phosphate site. Lysine 314 is modified (N6-(pyridoxal phosphate)lysine).

This sequence belongs to the group II decarboxylase family. It depends on pyridoxal 5'-phosphate as a cofactor.

It carries out the reaction L-tryptophan + H(+) = tryptamine + CO2. Involved in serotonin biosynthesis. Catalyzes the decarboxylation of L-tryptophan to tryptamine, which is converted to serotonin by tryptamine 5-hydroxylase. May play a minor role in serotonin biosynthetis during senescence. Accumulation of serotonin attenuates leaf senescence. This Oryza sativa subsp. japonica (Rice) protein is Tryptophan decarboxylase 2.